The primary structure comprises 414 residues: uncharacterized protein (414 aa).

A helical transmembrane segment spans residues 367 to 384 (TTWALTLICIACILLFFV).

It localises to the virion membrane. This is an uncharacterized protein from Human cytomegalovirus (strain Merlin) (HHV-5).